Consider the following 57-residue polypeptide: Thiocillin GE37468 (57 aa).

Positions 1–42 (MGNNEEYFIDVNDLSIDVFDVVEQGGAVTALTADHGMPEVGA) are cleaved as a propeptide — removed in mature form. Residues 43 to 44 (ST) constitute a cross-link (5-methyloxazole-4-carboxylic acid (Ser-Thr)). The segment at residues 43 to 52 (STNCFCYICC) is a cross-link (pyridine-2,5-dicarboxylic acid (Ser-Cys) (with S-53)). Residues 43-53 (STNCFCYICCS) constitute a cross-link (pyridine-2,5-dicarboxylic acid (Ser-Ser) (with C-52)). The segment at residues 45–46 (NC) is a cross-link (thiazole-4-carboxylic acid (Asn-Cys)). Positions 47-48 (FC) form a cross-link, thiazoline-4-carboxylic acid (Phe-Cys). A 5-hydroxy-3-methylproline (Ile) modification is found at isoleucine 50. The thiazole-4-carboxylic acid (Ile-Cys) cross-link spans 50–51 (IC). A cross-link (thiazole-4-carboxylic acid (Cys-Cys)) is located at residues 51-52 (CC). The segment at residues 53–54 (SC) is a cross-link (thiazole-4-carboxylic acid (Ser-Cys)). 2 positions are modified to 2,3-didehydroalanine (Ser): serine 55 and serine 56. A propeptide (removed in mature form) is located at residue asparagine 57.

Maturation of thiazole and oxazole containing antibiotics involves the enzymatic condensation of a Cys, Ser or Thr with the alpha-carbonyl of the preceding amino acid to form a thioether or ether bond, then dehydration to form a double bond with the alpha-amino nitrogen. Thiazoline or oxazoline ring are dehydrogenated to form thiazole or oxazole rings. In terms of processing, maturation of pyridinyl containing antibiotics involves the cross-linking of a Ser and a Cys-Ser pair usually separated by 7 or 8 residues along the peptide chain. The Ser residues are dehydrated to didehydroalanines, then bonded between their beta carbons. The alpha carbonyl of the Cys condenses with alpha carbon of the first Ser to form a pyridinyl ring. The ring may be multiply dehydrogenated to form a pyridine ring with loss of the amino nitrogen of the first Ser.

Its subcellular location is the secreted. In terms of biological role, has bacteriocidal activity against both aerobic and anaerobic Gram-positive bacteria. Inhibits growth of B.subtilis (MIC=0.047 ug/ml) and methicillin-resistant S.aureus (MRSA) (MIC=0.047 ug/ml). Has poor activity against Gram-negative bacteria, with the exception of B.fragilis. Inhibits bacterial protein biosynthesis by acting on elongation factor Tu (EF-Tu). Full antibiotic activity depends on the presence of the modified residue Ile-50. The chain is Thiocillin GE37468 (getA) from Streptomyces sp.